The primary structure comprises 220 residues: Probable GTP-binding protein EngB (220 aa).

The 177-residue stretch at 23–199 (SVREVAFAGR…ERVLASWLDI (177 aa)) folds into the EngB-type G domain. Mg(2+) is bound by residues serine 38 and threonine 60.

It belongs to the TRAFAC class TrmE-Era-EngA-EngB-Septin-like GTPase superfamily. EngB GTPase family. It depends on Mg(2+) as a cofactor.

Functionally, necessary for normal cell division and for the maintenance of normal septation. The protein is Probable GTP-binding protein EngB of Dechloromonas aromatica (strain RCB).